The following is a 475-amino-acid chain: 7-dehydrocholesterol reductase (475 aa).

Positions 1 to 21 (MAAKSQPSAPKTKSTSGLTNG) are disordered. Phosphoserine is present on Ser-14. The next 6 helical transmembrane spans lie at 40 to 60 (LASV…FIMA), 151 to 173 (WLLT…PTII), 178 to 200 (IPLL…VKGY), 266 to 286 (VTNS…DFFW), 306 to 326 (LGWG…LYLV), and 331 to 351 (QLPT…YYIF). NADP(+) is bound by residues Lys-358, Arg-362, Leu-395, Trp-400, and 407-408 (NY). Residues 420–440 (LACGGGHLLPYFYIIFMAILL) form a helical membrane-spanning segment. Residues Asp-447, 451-455 (CANKY), and Tyr-462 contribute to the NADP(+) site.

This sequence belongs to the ERG4/ERG24 family. In terms of assembly, interacts with DHCR24; this interaction regulates DHCR7 activity. Interacts with TMEM147.

It is found in the endoplasmic reticulum membrane. It catalyses the reaction cholesterol + NADP(+) = 7-dehydrocholesterol + NADPH + H(+). It carries out the reaction 7-dehydrodesmosterol + NADPH + H(+) = desmosterol + NADP(+). The catalysed reaction is 5,6alpha-epoxy-5alpha-cholestan-3beta-ol + H2O = 5alpha-cholestane-3beta,5,6beta-triol. The enzyme catalyses 5,6beta-epoxy-5beta-cholestan-3beta-ol + H2O = 5alpha-cholestane-3beta,5,6beta-triol. The protein operates within steroid biosynthesis; cholesterol biosynthesis. Its function is as follows. Oxidoreductase that catalyzes the last step of the cholesterol synthesis pathway, which transforms cholesta-5,7-dien-3beta-ol (7-dehydrocholesterol,7-DHC) into cholesterol by reducing the C7-C8 double bond of its sterol core. Can also metabolize cholesta-5,7,24-trien-3beta-ol (7-dehydrodemosterol, 7-DHD) to desmosterol, which is then metabolized by the Delta(24)-sterol reductase (DHCR24) to cholesterol. Modulates ferroptosis (a form of regulated cell death driven by iron-dependent lipid peroxidation) through the metabolic breakdown of the anti-ferroptotic metabolites 7-DHC and 7-DHD which, when accumulated, divert the propagation of peroxyl radical-mediated damage from phospholipid components to its sterol core, protecting plasma and mitochondrial membranes from phospholipid autoxidation. In terms of biological role, component of the microsomal antiestrogen binding site (AEBS), a multiproteic complex at the ER membrane that consists of an association between cholestenol Delta-isomerase/EBP and DHCR7. This complex is responsible for cholesterol-5,6-epoxide hydrolase (ChEH) activity, which consists in the hydration of cholesterol-5,6-epoxides (5,6-EC) into cholestane-3beta,5alpha,6beta-triol (CT). The precise role of each component of this complex has not been described yet. In Bos taurus (Bovine), this protein is 7-dehydrocholesterol reductase (DHCR7).